The following is a 248-amino-acid chain: Ubiquinone biosynthesis O-methyltransferase (248 aa).

Residues R41, G72, D93, and M136 each coordinate S-adenosyl-L-methionine.

This sequence belongs to the methyltransferase superfamily. UbiG/COQ3 family.

The catalysed reaction is a 3-demethylubiquinol + S-adenosyl-L-methionine = a ubiquinol + S-adenosyl-L-homocysteine + H(+). It catalyses the reaction a 3-(all-trans-polyprenyl)benzene-1,2-diol + S-adenosyl-L-methionine = a 2-methoxy-6-(all-trans-polyprenyl)phenol + S-adenosyl-L-homocysteine + H(+). It participates in cofactor biosynthesis; ubiquinone biosynthesis. Functionally, O-methyltransferase that catalyzes the 2 O-methylation steps in the ubiquinone biosynthetic pathway. This Rhizobium etli (strain CIAT 652) protein is Ubiquinone biosynthesis O-methyltransferase.